Here is a 338-residue protein sequence, read N- to C-terminus: Anthranilate phosphoribosyltransferase (338 aa).

Residues Gly78, 81 to 82 (GD), Thr86, 88 to 91 (NIST), 106 to 114 (KHGNRSVSS), and Ser118 contribute to the 5-phospho-alpha-D-ribose 1-diphosphate site. Position 78 (Gly78) interacts with anthranilate. Ser90 provides a ligand contact to Mg(2+). Residue Asn109 coordinates anthranilate. Anthranilate is bound at residue Arg164. Mg(2+) contacts are provided by Asp223 and Glu224.

This sequence belongs to the anthranilate phosphoribosyltransferase family. Homodimer. It depends on Mg(2+) as a cofactor.

It catalyses the reaction N-(5-phospho-beta-D-ribosyl)anthranilate + diphosphate = 5-phospho-alpha-D-ribose 1-diphosphate + anthranilate. It participates in amino-acid biosynthesis; L-tryptophan biosynthesis; L-tryptophan from chorismate: step 2/5. Catalyzes the transfer of the phosphoribosyl group of 5-phosphorylribose-1-pyrophosphate (PRPP) to anthranilate to yield N-(5'-phosphoribosyl)-anthranilate (PRA). The chain is Anthranilate phosphoribosyltransferase from Bacillus subtilis (strain 168).